Here is a 714-residue protein sequence, read N- to C-terminus: Epithelial splicing regulatory protein 1 (714 aa).

3 RRM domains span residues 225 to 302 (TVIR…KATG), 326 to 406 (IIVR…KSTA), and 450 to 530 (DCVR…ACSA).

This sequence belongs to the ESRP family.

It localises to the nucleus. In terms of biological role, mRNA splicing factor that regulates the formation of epithelial cell-specific isoforms. Specifically regulates the expression of FGFR2-IIIb, an epithelial cell-specific isoform of fgfr2. Acts by directly binding specific sequences in mRNAs. Binds the GU-rich sequence motifs in the ISE/ISS-3, a cis-element regulatory region present in the mRNA of fgfr2. This chain is Epithelial splicing regulatory protein 1 (esrp1), found in Danio rerio (Zebrafish).